The primary structure comprises 112 residues: U15-hexatoxin-Hi1a (112 aa).

A signal peptide spans 1-18 (MNTLIAFAVLLLLSTTLG). Residues 19 to 73 (DTDDKVSHEEIQERKELSGISEELLLQQLEAVEAALMEKERLEEMEEDGNSREKR) constitute a propeptide that is removed on maturation. Intrachain disulfides connect Cys-74-Cys-88, Cys-81-Cys-93, and Cys-87-Cys-107.

This sequence belongs to the neurotoxin 14 (magi-1) family. 08 (Ltx-4) subfamily. As to expression, expressed by the venom gland.

The protein localises to the secreted. Functionally, probable ion channel inhibitor. The chain is U15-hexatoxin-Hi1a from Hadronyche infensa (Fraser island funnel-web spider).